Here is a 197-residue protein sequence, read N- to C-terminus: FMN-dependent NADH:quinone oxidoreductase (197 aa).

FMN-binding positions include S10 and 17 to 19; that span reads SFS.

This sequence belongs to the azoreductase type 1 family. As to quaternary structure, homodimer. FMN serves as cofactor.

The enzyme catalyses 2 a quinone + NADH + H(+) = 2 a 1,4-benzosemiquinone + NAD(+). The catalysed reaction is N,N-dimethyl-1,4-phenylenediamine + anthranilate + 2 NAD(+) = 2-(4-dimethylaminophenyl)diazenylbenzoate + 2 NADH + 2 H(+). Its function is as follows. Quinone reductase that provides resistance to thiol-specific stress caused by electrophilic quinones. In terms of biological role, also exhibits azoreductase activity. Catalyzes the reductive cleavage of the azo bond in aromatic azo compounds to the corresponding amines. The polypeptide is FMN-dependent NADH:quinone oxidoreductase (Mycoplasmoides gallisepticum (strain R(low / passage 15 / clone 2)) (Mycoplasma gallisepticum)).